Reading from the N-terminus, the 546-residue chain is MFS-type transporter GME11371 (546 aa).

7 consecutive transmembrane segments (helical) span residues Leu39 to Ile59, Ile77 to Gly96, Met107 to Thr127, Ile137 to Val157, Gly167 to Leu187, Trp195 to Phe215, and Phe240 to Gly260. N-linked (GlcNAc...) asparagine glycosylation is present at Asn267. 7 helical membrane passes run Asp270–Trp290, Val307–Tyr327, Leu349–Thr369, Gly370–Ile390, Trp402–Leu422, Val433–Ser453, and Ile509–Pro529.

Belongs to the major facilitator superfamily.

The protein resides in the cell membrane. The protein operates within secondary metabolite biosynthesis. Functionally, MFS-type transporter; part of the gene cluster that mediates the biosynthesis of dibenzodioxocinones such as pestalotiollide B, a novel class of inhibitors against cholesterol ester transfer protein (CEPT). essential for dibenzodioxocinones biosynthesis and may be involved in the secretion of the cluster products. This is MFS-type transporter GME11371 from Pestalotiopsis microspora.